The primary structure comprises 489 residues: Coiled-coil domain-containing protein 77 (489 aa).

Ser-38 carries the phosphoserine modification. Coiled coils occupy residues 57 to 120 and 212 to 487; these read SQEL…QVCL and ERHQ…NALR.

This chain is Coiled-coil domain-containing protein 77 (Ccdc77), found in Mus musculus (Mouse).